A 329-amino-acid chain; its full sequence is Ketol-acid reductoisomerase (NADP(+)) (329 aa).

Residues 1–181 (MKVYYENDAD…GATRSGVLQT (181 aa)) enclose the KARI N-terminal Rossmann domain. NADP(+) contacts are provided by residues 24-27 (YGSQ), Arg-47, and 82-85 (DQVQ). Residue His-107 is part of the active site. Gly-133 is a binding site for NADP(+). A KARI C-terminal knotted domain is found at 182 to 327 (TFREETETDL…GELRKMMSWL (146 aa)). The Mg(2+) site is built by Asp-190, Glu-194, Glu-226, and Glu-230. A substrate-binding site is contributed by Ser-251.

Belongs to the ketol-acid reductoisomerase family. Mg(2+) serves as cofactor.

The catalysed reaction is (2R)-2,3-dihydroxy-3-methylbutanoate + NADP(+) = (2S)-2-acetolactate + NADPH + H(+). The enzyme catalyses (2R,3R)-2,3-dihydroxy-3-methylpentanoate + NADP(+) = (S)-2-ethyl-2-hydroxy-3-oxobutanoate + NADPH + H(+). It participates in amino-acid biosynthesis; L-isoleucine biosynthesis; L-isoleucine from 2-oxobutanoate: step 2/4. The protein operates within amino-acid biosynthesis; L-valine biosynthesis; L-valine from pyruvate: step 2/4. Functionally, involved in the biosynthesis of branched-chain amino acids (BCAA). Catalyzes an alkyl-migration followed by a ketol-acid reduction of (S)-2-acetolactate (S2AL) to yield (R)-2,3-dihydroxy-isovalerate. In the isomerase reaction, S2AL is rearranged via a Mg-dependent methyl migration to produce 3-hydroxy-3-methyl-2-ketobutyrate (HMKB). In the reductase reaction, this 2-ketoacid undergoes a metal-dependent reduction by NADPH to yield (R)-2,3-dihydroxy-isovalerate. The chain is Ketol-acid reductoisomerase (NADP(+)) from Maridesulfovibrio salexigens (strain ATCC 14822 / DSM 2638 / NCIMB 8403 / VKM B-1763) (Desulfovibrio salexigens).